Consider the following 63-residue polypeptide: Protein DsrB (63 aa).

Belongs to the DsrB family.

The polypeptide is Protein DsrB (Yersinia pseudotuberculosis serotype O:3 (strain YPIII)).